A 347-amino-acid chain; its full sequence is NADH-ubiquinone oxidoreductase chain 2 (347 aa).

The next 10 helical transmembrane spans lie at 13 to 33, 55 to 75, 96 to 116, 123 to 143, 149 to 169, 178 to 198, 201 to 221, 247 to 267, 274 to 294, and 326 to 346; these read IFAG…WVGL, AAIK…MAIL, LMIM…FWVP, PLMS…SIMY, LNVN…SWGG, ILAY…PYNP, TILN…LLNL, TLLS…WVII, NSLI…YFYL, and LPTL…MLMI.

Belongs to the complex I subunit 2 family. As to quaternary structure, core subunit of respiratory chain NADH dehydrogenase (Complex I) which is composed of 45 different subunits. Interacts with TMEM242.

It is found in the mitochondrion inner membrane. It catalyses the reaction a ubiquinone + NADH + 5 H(+)(in) = a ubiquinol + NAD(+) + 4 H(+)(out). In terms of biological role, core subunit of the mitochondrial membrane respiratory chain NADH dehydrogenase (Complex I) which catalyzes electron transfer from NADH through the respiratory chain, using ubiquinone as an electron acceptor. Essential for the catalytic activity and assembly of complex I. The chain is NADH-ubiquinone oxidoreductase chain 2 from Pan paniscus (Pygmy chimpanzee).